A 1488-amino-acid chain; its full sequence is DNA polymerase alpha catalytic subunit (1488 aa).

Disordered regions lie at residues 1-22 (MSES…GRFA), 79-124 (LRDF…TGKA), and 236-325 (FFSS…ESED). A compositionally biased stretch (acidic residues) spans 83-93 (FEDEDEYSDGE). Positions 96–103 (RKDSKKKK) match the Nuclear localization signal motif. The segment covering 99–113 (SKKKKGVAPNSKKRP) has biased composition (basic residues). Residue S239 is modified to Phosphoserine. A compositionally biased stretch (basic and acidic residues) spans 242–258 (IKKEPMPEKTPAKKATE). The span at 260–278 (PFSDNEMDFSCLDDDENQF) shows a compositional bias: acidic residues. Phosphoserine occurs at positions 262 and 269. Polar residues predominate over residues 286–303 (TEKVSQTKTAAEKTSQSK). Residues 304 to 325 (VAEKSAPKKETTGSPKESESED) are compositionally biased toward basic and acidic residues. T314 carries the phosphothreonine modification. Phosphoserine is present on S317. Positions 638 to 758 (DSERALLSWF…DLLEMYEKGE (121 aa)) are contains conserved residues essential for 3' -&gt; 5' exonuclease activities. DNA-binding regions lie at residues 675-734 (QIVA…CKQV) and 1255-1380 (PTKF…RKKS). Zn(2+) is bound by residues C1296, C1299, C1324, C1329, C1362, C1367, C1385, and C1388. The segment at 1296-1327 (CVTCKTEQLMASAYRPGPSNSHIAVLQQCAKS) adopts a CysA-type zinc-finger fold. The CysB motif motif lies at 1362 to 1388 (CDHPDCNFNTRTHSLRKKSHRPLCQKC).

It belongs to the DNA polymerase type-B family. As to quaternary structure, component of the alpha DNA polymerase complex (also known as the alpha DNA polymerase-primase complex) consisting of four subunits: the catalytic subunit PolA1, the regulatory subunit PolA2, and the primase complex subunits Prim1 and Prim2 respectively. PolA1 associates with the DNA primase complex before association with PolA2. Interacts with Dpit47; the interaction inhibits the activity of the DNA polymerase and occurs only in proliferating cells but not in quiescent cells. In terms of processing, in embryos, a cleaved form of 130 kDa is produced up to cycle 14 and then disappears. In terms of tissue distribution, expressed in embryos (at protein level).

It is found in the nucleus. It catalyses the reaction DNA(n) + a 2'-deoxyribonucleoside 5'-triphosphate = DNA(n+1) + diphosphate. With respect to regulation, inhibited by N2-(p-n-butylphenyl) deoxyguanosine 5'-triphosphate and N2-(p-n-butylphenyl) deoxyadenosine 5'-triphosphate. DNA synthesis is not inhibited by fungal toxin alpha-amaitin. The 3'-5' exonuclease activity is inhibited by 10mM dGMP. Functionally, catalytic subunit of the DNA polymerase alpha complex (also known as the alpha DNA polymerase-primase complex) which plays an essential role in the initiation of DNA synthesis. During the S phase of the cell cycle, the DNA polymerase alpha complex (composed of a catalytic subunit PolA1, an accessory subunit PolA2 and two primase subunits, the catalytic subunit Prim1 and the regulatory subunit Prim2) is recruited to DNA at the replicative forks. The primase subunit of the polymerase alpha complex initiates DNA synthesis by oligomerising short RNA primers on both leading and lagging strands. These primers are initially extended by the polymerase alpha catalytic subunit and subsequently transferred to polymerase delta and polymerase epsilon for processive synthesis on the lagging and leading strand, respectively. In addition to polymerase activity, exhibits 3' to 5' exonuclease activity. The protein is DNA polymerase alpha catalytic subunit of Drosophila melanogaster (Fruit fly).